The chain runs to 469 residues: Tetratricopeptide repeat protein 38 (469 aa).

TPR repeat units follow at residues 107-140 (REKL…HPTD), 179-212 (SYVK…ERTD), and 251-284 (CHVY…QCFA).

The protein belongs to the TTC38 family.

The sequence is that of Tetratricopeptide repeat protein 38 (ttc38) from Xenopus laevis (African clawed frog).